The following is a 337-amino-acid chain: MANSC domain-containing protein 4 (337 aa).

An N-terminal signal peptide occupies residues 1–18; the sequence is MRAVELLLLLGLASMVHG. At 19-278 the chain is on the extracellular side; that stretch reads LCSPTVFYRD…SSENEEPWDG (260 aa). Residues 33-113 enclose the MANSC domain; that stretch reads RFPGMLLDLE…LEPGASAILY (81 aa). Asparagine 114, asparagine 227, and asparagine 251 each carry an N-linked (GlcNAc...) asparagine glycan. 2 stretches are compositionally biased toward polar residues: residues 216 to 230 and 239 to 260; these read SPST…NKTI and TRVS…VNKT. Positions 216–277 are disordered; it reads SPSTDFTHSP…HSSENEEPWD (62 aa). A helical membrane pass occupies residues 279 to 299; sequence APASAGVWLACVTLGAAVISL. The Cytoplasmic segment spans residues 300–337; sequence CCRVVLGTSRCCGKRQGWSHMGQRSASGCRRNTLKENS. A disordered region spans residues 314–337; sequence RQGWSHMGQRSASGCRRNTLKENS.

Its subcellular location is the membrane. The polypeptide is MANSC domain-containing protein 4 (Mansc4) (Mus musculus (Mouse)).